The following is a 433-amino-acid chain: Protein slt1 (433 aa).

Disordered regions lie at residues serine 159–alanine 184, asparagine 200–serine 234, and serine 252–alanine 433. Composition is skewed to polar residues over residues aspartate 172 to alanine 184 and threonine 215 to valine 228. Phosphoserine is present on residues serine 227, serine 229, and serine 269. Residues isoleucine 343–aspartate 353 are compositionally biased toward basic and acidic residues. Polar residues predominate over residues glutamate 385–histidine 421. Phosphoserine is present on residues serine 409, serine 415, and serine 418.

In Schizosaccharomyces pombe (strain 972 / ATCC 24843) (Fission yeast), this protein is Protein slt1 (slt1).